Consider the following 364-residue polypeptide: RNA polymerase sigma factor SigA (364 aa).

The tract at residues Leu132–Thr202 is sigma-70 factor domain-2. Positions Asp156–Gln159 match the Interaction with polymerase core subunit RpoC motif. The sigma-70 factor domain-3 stretch occupies residues Glu211–Tyr287. The sigma-70 factor domain-4 stretch occupies residues Val300–His353. Residues Leu326–Ala345 constitute a DNA-binding region (H-T-H motif).

The protein belongs to the sigma-70 factor family. RpoD/SigA subfamily. In terms of assembly, interacts transiently with the RNA polymerase catalytic core.

Its subcellular location is the cytoplasm. Functionally, sigma factors are initiation factors that promote the attachment of RNA polymerase to specific initiation sites and are then released. This sigma factor is the primary sigma factor during exponential growth. This is RNA polymerase sigma factor SigA from Lactococcus lactis subsp. cremoris (Streptococcus cremoris).